We begin with the raw amino-acid sequence, 163 residues long: Nucleotide-binding protein Pnap_1080 (163 aa).

Belongs to the YajQ family.

Its function is as follows. Nucleotide-binding protein. In Polaromonas naphthalenivorans (strain CJ2), this protein is Nucleotide-binding protein Pnap_1080.